The primary structure comprises 237 residues: Sugar fermentation stimulation protein homolog (237 aa).

Belongs to the SfsA family.

In Pseudomonas savastanoi pv. phaseolicola (strain 1448A / Race 6) (Pseudomonas syringae pv. phaseolicola (strain 1448A / Race 6)), this protein is Sugar fermentation stimulation protein homolog.